The chain runs to 224 residues: Myogenin (224 aa).

A phosphoserine; by CaMK2G mark is found at Ser77 and Ser79. The bHLH domain maps to 81–132; the sequence is DRRRAATLREKRRLKKVNEAFEALKRSTLLNPNQRLPKVEILRSAIQYIERL. Thr87 carries the phosphothreonine; by CaMK2G modification.

In terms of assembly, homodimer and heterodimer with E12; heterodimerization enhances MYOG DNA-binding and transcriptional activities. Interacts with SMARCA4/BRG1/BAF190A. Interacts (via C-terminal region) with SSRP1 and SUPT16H; the interaction is indicative of an interaction with the FACT complex. Interacts with CSRP3. In terms of processing, phosphorylated by CAMK2G on threonine and serine amino acids in a muscle activity-dependent manner. Phosphorylation of Thr-87 impairs both DNA-binding and trans-activation functions in contracting muscles.

The protein resides in the nucleus. Functionally, acts as a transcriptional activator that promotes transcription of muscle-specific target genes and plays a role in muscle differentiation, cell cycle exit and muscle atrophy. Essential for the development of functional embryonic skeletal fiber muscle differentiation. However is dispensable for postnatal skeletal muscle growth; phosphorylation by CAMK2G inhibits its transcriptional activity in respons to muscle activity. Required for the recruitment of the FACT complex to muscle-specific promoter regions, thus promoting gene expression initiation. During terminal myoblast differentiation, plays a role as a strong activator of transcription at loci with an open chromatin structure previously initiated by MYOD1. Together with MYF5 and MYOD1, co-occupies muscle-specific gene promoter core regions during myogenesis. Also cooperates with myocyte-specific enhancer factor MEF2D and BRG1-dependent recruitment of SWI/SNF chromatin-remodeling enzymes to alter chromatin structure at myogenic late gene promoters. Facilitates cell cycle exit during terminal muscle differentiation through the up-regulation of miR-20a expression, which in turn represses genes involved in cell cycle progression. Binds to the E-box containing (E1) promoter region of the miR-20a gene. Also plays a role in preventing reversal of muscle cell differentiation. Contributes to the atrophy-related gene expression in adult denervated muscles. Induces fibroblasts to differentiate into myoblasts. This chain is Myogenin (MYOG), found in Bos taurus (Bovine).